We begin with the raw amino-acid sequence, 207 residues long: MIGYLQGSLAGVRKQSGRLLLLLDVQGVGYEVQTPARSLVELPAAGQSLQVFTHLQVREDQWLLFGFLQMAERDLFRQLISVSGIGPQLGLALLDSLSLAELVQAIVAGNTRLLSRTPGVGAKTAERLALELRSKLAEWREEAGLLPSATAAPIAAVQEDVEMTLLALGYNNREILQALTAIAQENLVQSGQPAEDWIREAIAWLSR.

A domain I region spans residues 1-68 (MIGYLQGSLA…EDQWLLFGFL (68 aa)). The segment at 69–147 (QMAERDLFRQ…EWREEAGLLP (79 aa)) is domain II. The flexible linker stretch occupies residues 148-158 (SATAAPIAAVQ). A domain III region spans residues 158-207 (QEDVEMTLLALGYNNREILQALTAIAQENLVQSGQPAEDWIREAIAWLSR).

Belongs to the RuvA family. In terms of assembly, homotetramer. Forms an RuvA(8)-RuvB(12)-Holliday junction (HJ) complex. HJ DNA is sandwiched between 2 RuvA tetramers; dsDNA enters through RuvA and exits via RuvB. An RuvB hexamer assembles on each DNA strand where it exits the tetramer. Each RuvB hexamer is contacted by two RuvA subunits (via domain III) on 2 adjacent RuvB subunits; this complex drives branch migration. In the full resolvosome a probable DNA-RuvA(4)-RuvB(12)-RuvC(2) complex forms which resolves the HJ.

Its subcellular location is the cytoplasm. Functionally, the RuvA-RuvB-RuvC complex processes Holliday junction (HJ) DNA during genetic recombination and DNA repair, while the RuvA-RuvB complex plays an important role in the rescue of blocked DNA replication forks via replication fork reversal (RFR). RuvA specifically binds to HJ cruciform DNA, conferring on it an open structure. The RuvB hexamer acts as an ATP-dependent pump, pulling dsDNA into and through the RuvAB complex. HJ branch migration allows RuvC to scan DNA until it finds its consensus sequence, where it cleaves and resolves the cruciform DNA. In Synechococcus elongatus (strain ATCC 33912 / PCC 7942 / FACHB-805) (Anacystis nidulans R2), this protein is Holliday junction branch migration complex subunit RuvA.